A 243-amino-acid chain; its full sequence is BTB/POZ domain-containing protein At4g08455 (243 aa).

A coiled-coil region spans residues 19–51; sequence KECYVEAGETEEELKREIDDLKAKVAFLRLSSS. Residues 64 to 136 form the BTB domain; sequence TDVVLIASED…LYTAEACLDE (73 aa).

In terms of assembly, interacts with CUL3A and CUL3B.

It functions in the pathway protein modification; protein ubiquitination. In terms of biological role, may act as a substrate-specific adapter of an E3 ubiquitin-protein ligase complex (CUL3-RBX1-BTB) which mediates the ubiquitination and subsequent proteasomal degradation of target proteins. This Arabidopsis thaliana (Mouse-ear cress) protein is BTB/POZ domain-containing protein At4g08455.